Here is a 98-residue protein sequence, read N- to C-terminus: Plastocyanin (98 aa).

The 98-residue stretch at 1–98 (AAIVKLGGDD…AGMKMTITVQ (98 aa)) folds into the Plastocyanin-like domain. Cu cation is bound by residues His-38, Cys-83, His-86, and Met-91.

The protein belongs to the plastocyanin family. Cu(2+) serves as cofactor.

It is found in the plastid. The protein resides in the chloroplast thylakoid membrane. Functionally, participates in electron transfer between P700 and the cytochrome b6-f complex in photosystem I. This chain is Plastocyanin (PETE), found in Ulva prolifera (Green seaweed).